We begin with the raw amino-acid sequence, 286 residues long: Aminoglycoside N(3)-acetyltransferase III (286 aa).

This sequence belongs to the antibiotic N-acetyltransferase family.

It carries out the reaction a 2-deoxystreptamine antibiotic + acetyl-CoA = an N(3)-acetyl-2-deoxystreptamine antibiotic + CoA + H(+). In terms of biological role, resistance to antibiotics containing the 2-deoxy-streptamine ring including gentamicin, kanamycin, tobramycin, neomycin and apramycin. The sequence is that of Aminoglycoside N(3)-acetyltransferase III (aacC3) from Salmonella sp.